The primary structure comprises 526 residues: Glutamyl-tRNA(Gln) amidotransferase subunit A, mitochondrial (526 aa).

Active-site charge relay system residues include K76 and S171. The active-site Acyl-ester intermediate is S195.

This sequence belongs to the amidase family. GatA subfamily. Subunit of the heterotrimeric GatCAB amidotransferase (AdT) complex, composed of A (QRSL1), B (GATB) and C (GATC) subunits.

The protein resides in the mitochondrion. The catalysed reaction is L-glutamyl-tRNA(Gln) + L-glutamine + ATP + H2O = L-glutaminyl-tRNA(Gln) + L-glutamate + ADP + phosphate + H(+). Its function is as follows. Allows the formation of correctly charged Gln-tRNA(Gln) through the transamidation of misacylated Glu-tRNA(Gln) in the mitochondria. The reaction takes place in the presence of glutamine and ATP through an activated gamma-phospho-Glu-tRNA(Gln). In Canis lupus familiaris (Dog), this protein is Glutamyl-tRNA(Gln) amidotransferase subunit A, mitochondrial.